The sequence spans 995 residues: uncharacterized protein (995 aa).

Residues 1 to 30 (MFIHRMKSNLASLFLSFFLLLACEFTFSYA) form the signal peptide. 6 N-linked (GlcNAc...) asparagine glycosylation sites follow: N115, N162, N225, N422, N478, and N486. Residue E502 is part of the active site. N-linked (GlcNAc...) asparagine glycans are attached at residues N546 and N611. Residue D669 is the Proton donor of the active site. Residues N670, N823, N843, and N986 are each glycosylated (N-linked (GlcNAc...) asparagine).

Belongs to the glycosyl hydrolase 31 family.

The protein resides in the spore wall. This is an uncharacterized protein from Schizosaccharomyces pombe (strain 972 / ATCC 24843) (Fission yeast).